Reading from the N-terminus, the 402-residue chain is Elongation factor Tu (402 aa).

Residues Lys-10 to Lys-212 enclose the tr-type G domain. Positions Gly-19–Thr-26 are G1. A GTP-binding site is contributed by Gly-19–Thr-26. Residue Thr-26 coordinates Mg(2+). The G2 stretch occupies residues Gly-60 to Ala-64. Positions Asp-81–Gly-84 are G3. GTP-binding positions include Asp-81–His-85 and Asn-136–Asp-139. A G4 region spans residues Asn-136 to Asp-139. The interval Ser-177–Phe-179 is G5.

This sequence belongs to the TRAFAC class translation factor GTPase superfamily. Classic translation factor GTPase family. EF-Tu/EF-1A subfamily. In terms of assembly, monomer.

Its subcellular location is the cytoplasm. It catalyses the reaction GTP + H2O = GDP + phosphate + H(+). In terms of biological role, GTP hydrolase that promotes the GTP-dependent binding of aminoacyl-tRNA to the A-site of ribosomes during protein biosynthesis. The chain is Elongation factor Tu from Sulfurovum sp. (strain NBC37-1).